The sequence spans 198 residues: Nucleoid occlusion factor SlmA (198 aa).

The region spanning 10-70 (NRREEILQSL…SLIEFIEDSL (61 aa)) is the HTH tetR-type domain. Positions 33-52 (TTAKLAASVGVSEAALYRHF) form a DNA-binding region, H-T-H motif. The stretch at 117–144 (EQDRLQGRINQLFERIEAQLRQVLREKR) forms a coiled coil.

Belongs to the nucleoid occlusion factor SlmA family. Homodimer. Interacts with FtsZ.

Its subcellular location is the cytoplasm. It localises to the nucleoid. In terms of biological role, required for nucleoid occlusion (NO) phenomenon, which prevents Z-ring formation and cell division over the nucleoid. Acts as a DNA-associated cell division inhibitor that binds simultaneously chromosomal DNA and FtsZ, and disrupts the assembly of FtsZ polymers. SlmA-DNA-binding sequences (SBS) are dispersed on non-Ter regions of the chromosome, preventing FtsZ polymerization at these regions. The sequence is that of Nucleoid occlusion factor SlmA from Salmonella agona (strain SL483).